The primary structure comprises 345 residues: MTSIFGYPKEELQLDLVAHGFKKYLAEQIFDWIYVKNIYSFDEMTNISKTDRNKLQEYYTIEPLKIVVQQQSKDWTVKFLFQLADGYKIETVLMPQSYGNSVCVTTQVGCNMACTFCASGLLKKTRNLSTAEIVQQVMMVNRYLATTNERVSHIVVMGIGEPFDNFDNTLKFVNIINDPKGYQIGARHITISTCGLVPKIKQFAELKTQVNLAISLHAPNNTIRNQLMPINKAYPVEKLMDAVRYYIELTNRRVTFEYILIENVNDSRETALELAKLIRGLNAYVNLIPYNTVAENGHQRSTKINKFFETLQQQKINCIVRREFGHDIDAACGQLRAKNEGVIRK.

Catalysis depends on Glu90, which acts as the Proton acceptor. The 232-residue stretch at 96–327 folds into the Radical SAM core domain; it reads QSYGNSVCVT…CIVRREFGHD (232 aa). Residues Cys103 and Cys332 are joined by a disulfide bond. 3 residues coordinate [4Fe-4S] cluster: Cys110, Cys114, and Cys117. Residues 160 to 161, Ser192, 215 to 217, and Asn291 contribute to the S-adenosyl-L-methionine site; these read GE and SLH. The S-methylcysteine intermediate role is filled by Cys332.

This sequence belongs to the radical SAM superfamily. RlmN family. It depends on [4Fe-4S] cluster as a cofactor.

It is found in the cytoplasm. It carries out the reaction adenosine(2503) in 23S rRNA + 2 reduced [2Fe-2S]-[ferredoxin] + 2 S-adenosyl-L-methionine = 2-methyladenosine(2503) in 23S rRNA + 5'-deoxyadenosine + L-methionine + 2 oxidized [2Fe-2S]-[ferredoxin] + S-adenosyl-L-homocysteine. It catalyses the reaction adenosine(37) in tRNA + 2 reduced [2Fe-2S]-[ferredoxin] + 2 S-adenosyl-L-methionine = 2-methyladenosine(37) in tRNA + 5'-deoxyadenosine + L-methionine + 2 oxidized [2Fe-2S]-[ferredoxin] + S-adenosyl-L-homocysteine. Specifically methylates position 2 of adenine 2503 in 23S rRNA and position 2 of adenine 37 in tRNAs. The sequence is that of Probable dual-specificity RNA methyltransferase RlmN from Spiroplasma citri.